The primary structure comprises 122 residues: Large ribosomal subunit protein uL14 (122 aa).

It belongs to the universal ribosomal protein uL14 family. As to quaternary structure, part of the 50S ribosomal subunit. Forms a cluster with proteins L3 and L19. In the 70S ribosome, L14 and L19 interact and together make contacts with the 16S rRNA in bridges B5 and B8.

Binds to 23S rRNA. Forms part of two intersubunit bridges in the 70S ribosome. The polypeptide is Large ribosomal subunit protein uL14 (Synechococcus sp. (strain JA-2-3B'a(2-13)) (Cyanobacteria bacterium Yellowstone B-Prime)).